The following is a 235-amino-acid chain: PRA1 family protein 1 (235 aa).

Residues 1-17 are compositionally biased toward polar residues; that stretch reads MESNSNSNETMYGNPNI. The segment at 1 to 55 is disordered; sequence MESNSNSNETMYGNPNINMGFVDSGNSNIGNNTGSMSPPPQQQQQPQQASSTPAG. Residues 24 to 48 show a composition bias toward low complexity; the sequence is SGNSNIGNNTGSMSPPPQQQQQPQQ. A run of 2 helical transmembrane segments spans residues 144–164 and 187–207; these read SVFF…LLFI and AFLS…LVGA.

This sequence belongs to the PRA1 family.

The protein resides in the membrane. May act as a general Rab protein regulator. This chain is PRA1 family protein 1 (prafA), found in Dictyostelium discoideum (Social amoeba).